A 166-amino-acid chain; its full sequence is UPF0304 protein VS_1049 (166 aa).

The protein belongs to the UPF0304 family.

In Vibrio atlanticus (strain LGP32) (Vibrio splendidus (strain Mel32)), this protein is UPF0304 protein VS_1049.